We begin with the raw amino-acid sequence, 817 residues long: V-type proton ATPase subunit a1 (817 aa).

The Cytoplasmic segment spans residues 1–422 (MEEFLDKLPQ…PAVYSVVTYP (422 aa)). Residues 97 to 133 (DIALGDLERQLADHEHEVLEMNSNSEKLRQTYNELLE) are a coiled coil. The helical transmembrane segment at 423 to 443 (FLFAVMFGDWGHGLCLLLGAL) threads the bilayer. Over 444–468 (YLLARERKLSTQKLGSFMEMLFGGR) the chain is Vacuolar. Residues 469–489 (YVILLMALFSIYCGLIYNEFF) form a helical membrane-spanning segment. The Cytoplasmic segment spans residues 490–547 (SVPFHIFGGSAYKCRDTTCSDAYTVGLIKYRDPYPFGVDPSWRGSRTELPYLNSLKMK). Residues 548–568 (MSILLGIAQMNLGLILSFFNA) form a helical membrane-spanning segment. Topologically, residues 569 to 580 (RFFGSSLDIRYQ) are vacuolar. A helical membrane pass occupies residues 581–601 (FIPQMIFLNSLFGYLSLLIII). Residues 602 to 639 (KWCTGSQADLYHVMIYMFLSPTEELGENELFWGQRPLQ) lie on the Cytoplasmic side of the membrane. Residues 640-660 (IVLLLLAFIAVPWMLFPKPFA) form a helical membrane-spanning segment. The Vacuolar segment spans residues 661-758 (LRKIHMERFQ…VLLLAWGYEN (98 aa)). Residues 759–779 (ILIRLIGVAVFAFATAFILLM) traverse the membrane as a helical segment. Topologically, residues 780 to 817 (METLSAFLHALRLHWVEFMGKFFNGDGYKFKPFSFALI) are cytoplasmic.

Belongs to the V-ATPase 116 kDa subunit family. In terms of assembly, V-ATPase is a heteromultimeric enzyme composed of a peripheral catalytic V1 complex (components A to H) attached to an integral membrane V0 proton pore complex (components: a, c, c'', d and e).

Its subcellular location is the vacuole membrane. It is found in the golgi apparatus. The protein resides in the trans-Golgi network membrane. Its function is as follows. Essential component of the vacuolar proton pump (V-ATPase), a multimeric enzyme that catalyzes the translocation of protons across the membranes. Required for assembly and activity of the V-ATPase. Required during cell expansion. The sequence is that of V-type proton ATPase subunit a1 from Arabidopsis thaliana (Mouse-ear cress).